We begin with the raw amino-acid sequence, 235 residues long: Orotidine 5'-phosphate decarboxylase (235 aa).

Residues aspartate 9, lysine 31, 58–67, threonine 121, arginine 180, glutamine 190, glycine 210, and arginine 211 each bind substrate; that span reads DLKFHDIPNT. Lysine 60 functions as the Proton donor in the catalytic mechanism.

This sequence belongs to the OMP decarboxylase family. Type 1 subfamily. As to quaternary structure, homodimer.

It catalyses the reaction orotidine 5'-phosphate + H(+) = UMP + CO2. It participates in pyrimidine metabolism; UMP biosynthesis via de novo pathway; UMP from orotate: step 2/2. Catalyzes the decarboxylation of orotidine 5'-monophosphate (OMP) to uridine 5'-monophosphate (UMP). This chain is Orotidine 5'-phosphate decarboxylase, found in Nitratidesulfovibrio vulgaris (strain ATCC 29579 / DSM 644 / CCUG 34227 / NCIMB 8303 / VKM B-1760 / Hildenborough) (Desulfovibrio vulgaris).